Consider the following 176-residue polypeptide: Parathyroid hormone-related protein (176 aa).

An N-terminal signal peptide occupies residues 1–25; the sequence is MMFTKLFQQWSFAVFLLSYSVPSYG. The propeptide occupies 26 to 37; that stretch reads RSVEGISRRLKR. An important for receptor binding region spans residues 58 to 69; it reads RIFLQNLIEGVN. Residues 76 to 157 are disordered; it reads TSEVSPNPKP…WLNSGMYGSN (82 aa). Composition is skewed to polar residues over residues 77–91 and 106–116; these read SEVS…NTKN and TQETNKSQTYK. A Nuclear localization signal motif is present at residues 109-130; the sequence is TNKSQTYKEQPLKVSGKKKKAK. Basic residues predominate over residues 123-133; that stretch reads SGKKKKAKPGK.

The protein belongs to the parathyroid hormone family.

It is found in the secreted. The protein resides in the cytoplasm. Its subcellular location is the nucleus. In terms of biological role, neuroendocrine peptide which is a critical regulator of cellular and organ growth, development, migration, differentiation and survival and of epithelial calcium ion transport. Acts by binding to its receptor, PTH1R, activating G protein-coupled receptor signaling. Regulates endochondral bone development and epithelial-mesenchymal interactions during the formation of the mammary glands and teeth. Required for skeletal homeostasis. Functionally, potent inhibitor of osteoclastic bone resorption. In Gallus gallus (Chicken), this protein is Parathyroid hormone-related protein (PTHLH).